The sequence spans 276 residues: Sec-independent protein translocase protein TatC (276 aa).

Residues 1 to 29 form a disordered region; sequence MVSLTSVPPYADATPDTRASSGPAPGRRK. 6 helical membrane passes run 49–69, 103–123, 136–156, 187–207, 221–241, and 242–262; these read GGLV…LVLL, LFLA…AFVT, GFLG…WWVL, LVLA…LNLA, WAVL…DALT, and MVLV…VAVW.

It belongs to the TatC family. The Tat system comprises two distinct complexes: a TatABC complex, containing multiple copies of TatA, TatB and TatC subunits, and a separate TatA complex, containing only TatA subunits. Substrates initially bind to the TatABC complex, which probably triggers association of the separate TatA complex to form the active translocon.

It localises to the cell membrane. Functionally, part of the twin-arginine translocation (Tat) system that transports large folded proteins containing a characteristic twin-arginine motif in their signal peptide across membranes. Together with TatB, TatC is part of a receptor directly interacting with Tat signal peptides. In Xylanimonas cellulosilytica (strain DSM 15894 / JCM 12276 / CECT 5975 / KCTC 9989 / LMG 20990 / NBRC 107835 / XIL07), this protein is Sec-independent protein translocase protein TatC.